Here is a 74-residue protein sequence, read N- to C-terminus: Cytochrome c oxidase assembly factor 5 (74 aa).

Residues glutamate 27–arginine 65 form the CHCH domain. Positions cysteine 30 to cysteine 41 match the Cx10C motif motif. 2 disulfide bridges follow: cysteine 30-cysteine 57 and cysteine 41-cysteine 47. Serine 37 carries the phosphoserine modification. The Cx9C motif motif lies at cysteine 47–cysteine 57.

This sequence belongs to the PET191 family.

Its function is as follows. Involved in an early step of the mitochondrial complex IV assembly process. The polypeptide is Cytochrome c oxidase assembly factor 5 (Coa5) (Pongo abelii (Sumatran orangutan)).